The sequence spans 229 residues: Cytochrome c oxidase subunit 2 (229 aa).

Residues 1 to 26 are Mitochondrial intermembrane-facing; that stretch reads MSTWANLGLQDSASPLMEQLIFFHDH. The chain crosses the membrane as a helical span at residues 27 to 48; it reads ALLILVMITILVGYLMFMLFFN. At 49–62 the chain is on the mitochondrial matrix side; the sequence is SYINRFLLHGQLIE. A helical transmembrane segment spans residues 63–82; that stretch reads MIWTILPAIILLFIAMPSLR. Over 83–229 the chain is Mitochondrial intermembrane; that stretch reads LLYLLDEINE…IKWIASKVNS (147 aa). Residues histidine 161, cysteine 196, glutamate 198, cysteine 200, histidine 204, and methionine 207 each coordinate Cu cation. Mg(2+) is bound at residue glutamate 198.

This sequence belongs to the cytochrome c oxidase subunit 2 family. Component of the cytochrome c oxidase (complex IV, CIV), a multisubunit enzyme composed of a catalytic core of 3 subunits and several supernumerary subunits. The complex exists as a monomer or a dimer and forms supercomplexes (SCs) in the inner mitochondrial membrane with ubiquinol-cytochrome c oxidoreductase (cytochrome b-c1 complex, complex III, CIII). The cofactor is Cu cation.

The protein resides in the mitochondrion inner membrane. It carries out the reaction 4 Fe(II)-[cytochrome c] + O2 + 8 H(+)(in) = 4 Fe(III)-[cytochrome c] + 2 H2O + 4 H(+)(out). Its function is as follows. Component of the cytochrome c oxidase, the last enzyme in the mitochondrial electron transport chain which drives oxidative phosphorylation. The respiratory chain contains 3 multisubunit complexes succinate dehydrogenase (complex II, CII), ubiquinol-cytochrome c oxidoreductase (cytochrome b-c1 complex, complex III, CIII) and cytochrome c oxidase (complex IV, CIV), that cooperate to transfer electrons derived from NADH and succinate to molecular oxygen, creating an electrochemical gradient over the inner membrane that drives transmembrane transport and the ATP synthase. Cytochrome c oxidase is the component of the respiratory chain that catalyzes the reduction of oxygen to water. Electrons originating from reduced cytochrome c in the intermembrane space (IMS) are transferred via the dinuclear copper A center (CU(A)) of subunit 2 and heme A of subunit 1 to the active site in subunit 1, a binuclear center (BNC) formed by heme A3 and copper B (CU(B)). The BNC reduces molecular oxygen to 2 water molecules using 4 electrons from cytochrome c in the IMS and 4 protons from the mitochondrial matrix. The protein is Cytochrome c oxidase subunit 2 (mt:CoII) of Drosophila bifasciata (Fruit fly).